The following is a 469-amino-acid chain: Phosphatidylinositol 4-kinase type 2-alpha (469 aa).

Disordered stretches follow at residues 1 to 30 (MDETSPLVSPDRDQTEYSYQSQCSPGATVP) and 50 to 72 (TATSCGSAASGPSPPGSPCDQER). Residues 16 to 25 (EYSYQSQCSP) show a composition bias toward polar residues. Over residues 50–60 (TATSCGSAASG) the composition is skewed to low complexity. A PI3K/PI4K catalytic domain is found at 115-443 (DILPERISQG…VQTPPVIVET (329 aa)). A G-loop region spans residues 121-127 (ISQGSSG). ATP contacts are provided by residues 122-128 (SQGSSGS) and Lys143. The important for substrate binding stretch occupies residues 148–150 (EPY). Residues 156–169 (KWTKWLQKLCCPCC) are important for interaction with membranes. S-palmitoyl cysteine attachment occurs at residues Cys165, Cys166, Cys168, and Cys169. Position 252 to 255 (252 to 255 (QIFV)) interacts with ATP. The tract at residues 259–267 (KDADYWLRR) is important for interaction with membranes. The interval 296-304 (RNTDRGNDN) is catalytic loop. The tract at residues 334–354 (AIDNGLAFPLKHPDSWRAYPF) is activation loop. Asp336 is an ATP binding site. The tract at residues 349-358 (WRAYPFYWAW) is important for interaction with membranes.

The protein belongs to the PI3/PI4-kinase family. Type II PI4K subfamily.

It is found in the golgi apparatus. The protein localises to the trans-Golgi network membrane. Its subcellular location is the membrane raft. The protein resides in the endosome. It localises to the endosome membrane. It is found in the cytoplasmic vesicle. The protein localises to the cell projection. Its subcellular location is the dendrite. The protein resides in the presynaptic cell membrane. It localises to the synapse. It is found in the synaptosome. The protein localises to the mitochondrion. Its subcellular location is the membrane. The protein resides in the cell membrane. It localises to the perikaryon. It is found in the neuron projection. The catalysed reaction is a 1,2-diacyl-sn-glycero-3-phospho-(1D-myo-inositol) + ATP = a 1,2-diacyl-sn-glycero-3-phospho-(1D-myo-inositol 4-phosphate) + ADP + H(+). Membrane-bound phosphatidylinositol-4 kinase (PI4-kinase) that catalyzes the phosphorylation of phosphatidylinositol (PI) to phosphatidylinositol 4-phosphate (PI4P), a lipid that plays important roles in endocytosis, Golgi function, protein sorting and membrane trafficking. Besides, phosphorylation of phosphatidylinositol (PI) to phosphatidylinositol 4-phosphate (PI4P) is the first committed step in the generation of phosphatidylinositol 4,5-bisphosphate (PIP2), a precursor of the second messenger inositol 1,4,5-trisphosphate (InsP3). This chain is Phosphatidylinositol 4-kinase type 2-alpha (pi4k2a), found in Xenopus laevis (African clawed frog).